Consider the following 334-residue polypeptide: Protein-methionine-sulfoxide reductase catalytic subunit MsrP (334 aa).

The segment at residues 1 to 44 is a signal peptide (tat-type signal); that stretch reads MKKNQFLKESDVTAESVFFMTRRQVLKALGISAAALSLPHAAHA. Mo-molybdopterin-binding positions include Asn-88, 91-92, Cys-146, Thr-181, Asn-233, Arg-238, and 249-251; these read YE and GIK.

Belongs to the MsrP family. As to quaternary structure, heterodimer of a catalytic subunit (MsrP) and a heme-binding subunit (MsrQ). Requires Mo-molybdopterin as cofactor. Predicted to be exported by the Tat system. The position of the signal peptide cleavage has not been experimentally proven.

The protein resides in the periplasm. It carries out the reaction L-methionyl-[protein] + a quinone + H2O = L-methionyl-(S)-S-oxide-[protein] + a quinol. The enzyme catalyses L-methionyl-[protein] + a quinone + H2O = L-methionyl-(R)-S-oxide-[protein] + a quinol. Its function is as follows. Part of the MsrPQ system that repairs oxidized periplasmic proteins containing methionine sulfoxide residues (Met-O), using respiratory chain electrons. Thus protects these proteins from oxidative-stress damage caused by reactive species of oxygen and chlorine generated by the host defense mechanisms. MsrPQ is essential for the maintenance of envelope integrity under bleach stress, rescuing a wide series of structurally unrelated periplasmic proteins from methionine oxidation, including the primary periplasmic chaperone SurA and the lipoprotein Pal. The catalytic subunit MsrP is non-stereospecific, being able to reduce both (R-) and (S-) diastereoisomers of methionine sulfoxide. The polypeptide is Protein-methionine-sulfoxide reductase catalytic subunit MsrP (Escherichia coli (strain 55989 / EAEC)).